Consider the following 304-residue polypeptide: Homoserine O-succinyltransferase (304 aa).

The active-site Acyl-thioester intermediate is Cys142. Lys163 and Ser192 together coordinate substrate. His235 functions as the Proton acceptor in the catalytic mechanism. The active site involves Glu237. Arg249 contacts substrate.

This sequence belongs to the MetA family.

The protein localises to the cytoplasm. The enzyme catalyses L-homoserine + succinyl-CoA = O-succinyl-L-homoserine + CoA. The protein operates within amino-acid biosynthesis; L-methionine biosynthesis via de novo pathway; O-succinyl-L-homoserine from L-homoserine: step 1/1. Transfers a succinyl group from succinyl-CoA to L-homoserine, forming succinyl-L-homoserine. In Blochmanniella pennsylvanica (strain BPEN), this protein is Homoserine O-succinyltransferase.